A 326-amino-acid polypeptide reads, in one-letter code: RNA/RNP complex-1-interacting phosphatase (326 aa).

The disordered stretch occupies residues 1-28 (MNQWHYGRYSRGRDFTARAPPKKKGKNQ). A Tyrosine-protein phosphatase domain is found at 59-206 (FEAKLMPEEC…LQKRRVRKNQ (148 aa)). The active-site Phosphocysteine intermediate is the C150. 151–156 (THGLNR) contributes to the substrate binding site. The Proton donor/acceptor role is filled by R156. The disordered stretch occupies residues 200–258 (RRVRKNQNASASRSGGLEDSAHLTEQVHTTNKPVNKGPKKSRRGGHLESSQHVQTQSSA). The span at 247–258 (ESSQHVQTQSSA) shows a compositional bias: polar residues.

It belongs to the protein-tyrosine phosphatase family. Non-receptor class dual specificity subfamily. In terms of assembly, monomer. May interact with SFRS7 and SFRS9/SRP30C.

Its subcellular location is the nucleus. It localises to the nucleus speckle. In terms of biological role, possesses RNA 5'-triphosphatase and diphosphatase activities, but displays a poor protein-tyrosine phosphatase activity. In addition, has phosphatase activity with ATP, ADP and O-methylfluorescein phosphate (in vitro). Binds to RNA. May participate in nuclear mRNA metabolism. The protein is RNA/RNP complex-1-interacting phosphatase (Dusp11) of Rattus norvegicus (Rat).